The sequence spans 246 residues: 1-(5-phosphoribosyl)-5-[(5-phosphoribosylamino)methylideneamino] imidazole-4-carboxamide isomerase (246 aa).

Residue Asp7 is the Proton acceptor of the active site. Asp130 (proton donor) is an active-site residue.

Belongs to the HisA/HisF family.

It is found in the cytoplasm. It carries out the reaction 1-(5-phospho-beta-D-ribosyl)-5-[(5-phospho-beta-D-ribosylamino)methylideneamino]imidazole-4-carboxamide = 5-[(5-phospho-1-deoxy-D-ribulos-1-ylimino)methylamino]-1-(5-phospho-beta-D-ribosyl)imidazole-4-carboxamide. The protein operates within amino-acid biosynthesis; L-histidine biosynthesis; L-histidine from 5-phospho-alpha-D-ribose 1-diphosphate: step 4/9. In Sodalis glossinidius (strain morsitans), this protein is 1-(5-phosphoribosyl)-5-[(5-phosphoribosylamino)methylideneamino] imidazole-4-carboxamide isomerase.